We begin with the raw amino-acid sequence, 346 residues long: Probable dual-specificity RNA methyltransferase RlmN (346 aa).

The Proton acceptor role is filled by Glu91. The 229-residue stretch at 97-325 (TEKRLTVCVS…VSVRYSKGLE (229 aa)) folds into the Radical SAM core domain. Cys104 and Cys330 are joined by a disulfide. Residues Cys111, Cys115, and Cys118 each contribute to the [4Fe-4S] cluster site. S-adenosyl-L-methionine-binding positions include 158 to 159 (GE), Ser188, 211 to 213 (SLH), and Asn287. The active-site S-methylcysteine intermediate is Cys330.

This sequence belongs to the radical SAM superfamily. RlmN family. It depends on [4Fe-4S] cluster as a cofactor.

It localises to the cytoplasm. The catalysed reaction is adenosine(2503) in 23S rRNA + 2 reduced [2Fe-2S]-[ferredoxin] + 2 S-adenosyl-L-methionine = 2-methyladenosine(2503) in 23S rRNA + 5'-deoxyadenosine + L-methionine + 2 oxidized [2Fe-2S]-[ferredoxin] + S-adenosyl-L-homocysteine. The enzyme catalyses adenosine(37) in tRNA + 2 reduced [2Fe-2S]-[ferredoxin] + 2 S-adenosyl-L-methionine = 2-methyladenosine(37) in tRNA + 5'-deoxyadenosine + L-methionine + 2 oxidized [2Fe-2S]-[ferredoxin] + S-adenosyl-L-homocysteine. In terms of biological role, specifically methylates position 2 of adenine 2503 in 23S rRNA and position 2 of adenine 37 in tRNAs. The chain is Probable dual-specificity RNA methyltransferase RlmN from Picosynechococcus sp. (strain ATCC 27264 / PCC 7002 / PR-6) (Agmenellum quadruplicatum).